Reading from the N-terminus, the 124-residue chain is Autophagy-related protein 8 (124 aa).

Gly116 carries the Phosphatidylethanolamine amidated glycine lipid modification. The propeptide at 117–124 is removed in mature form; the sequence is GAGPLLEK.

This sequence belongs to the ATG8 family. As to quaternary structure, conjugation to phosphatidylethanolamine (PE) leads to homodimerization. Interacts with ATG1, ATG3, ATG4, ATG7 and ATG12. Post-translationally, the C-terminal 8 residues of ATG8 are removed by ATG4 to expose Gly-116 at the C-terminus. This Gly-116 forms then a thioester bond with the 'Cys-550' of ATG7 (E1-like activating enzyme) before being transferred to the 'Cys-244' of ATG3 (the specific E2 conjugating enzyme), in order to be finally amidated with phosphatidylethanolamine. This lipid modification anchors ATG8 to membranes and can be reversed by ATG4, releasing soluble ATG8.

The protein localises to the cytoplasmic vesicle. It localises to the cvt vesicle membrane. It is found in the autophagosome membrane. The protein resides in the vacuole membrane. Functionally, ubiquitin-like modifier involved in cytoplasm to vacuole transport (Cvt) vesicles and autophagosome formation. With ATG4, mediates the delivery of the vesicles and autophagosomes to the vacuole via the microtubule cytoskeleton. Required for selective autophagic degradation of the nucleus (nucleophagy) as well as for mitophagy which contributes to regulate mitochondrial quantity and quality by eliminating the mitochondria to a basal level to fulfill cellular energy requirements and preventing excess ROS production. Also participates in membrane fusion events that take place in the early secretory pathway. Also involved in endoplasmic reticulum-specific autophagic process and is essential for the survival of cells subjected to severe ER stress. The ATG8-PE conjugate mediates tethering between adjacent membranes and stimulates membrane hemifusion, leading to expansion of the autophagosomal membrane during autophagy. Moreover not only conjugation, but also subsequent ATG8-PE deconjugation is an important step required to facilitate multiple events during macroautophagy, and especially for efficient autophagosome biogenesis, the assembly of ATG9-containing tubulovesicular clusters into phagophores/autophagosomes, and for the disassembly of PAS-associated ATG components. The protein is Autophagy-related protein 8 of Kluyveromyces marxianus (strain DMKU3-1042 / BCC 29191 / NBRC 104275) (Yeast).